The following is a 1569-amino-acid chain: Pentafunctional AROM polypeptide (1569 aa).

The tract at residues 1–382 is 3-dehydroquinate synthase; the sequence is MAEAKKPGPE…HEPRASVVDD (382 aa). Residues 49–51, 84–87, 115–117, and Asp120 contribute to the NAD(+) site; these read DTN, EASK, and GGV. Arg131 is a 7-phospho-2-dehydro-3-deoxy-D-arabino-heptonate binding site. 140–141 serves as a coordination point for NAD(+); sequence TT. Asp147 and Lys153 together coordinate 7-phospho-2-dehydro-3-deoxy-D-arabino-heptonate. An NAD(+)-binding site is contributed by Lys162. Residue Asn163 participates in 7-phospho-2-dehydro-3-deoxy-D-arabino-heptonate binding. NAD(+)-binding positions include 180–183 and Asn191; that span reads FLET. Glu195 contacts Zn(2+). 7-phospho-2-dehydro-3-deoxy-D-arabino-heptonate-binding positions include 195–198 and Lys248; that span reads EVVK. Glu258 serves as the catalytic Proton acceptor; for 3-dehydroquinate synthase activity. Residues 262–266 and His269 contribute to the 7-phospho-2-dehydro-3-deoxy-D-arabino-heptonate site; that span reads RNLLN. His269 lines the Zn(2+) pocket. His273 acts as the Proton acceptor; for 3-dehydroquinate synthase activity in catalysis. 7-phospho-2-dehydro-3-deoxy-D-arabino-heptonate contacts are provided by His285 and Lys354. His285 lines the Zn(2+) pocket. The tract at residues 395–837 is EPSP synthase; sequence VTPGVPSNLD…WDILSQAFKV (443 aa). The active-site For EPSP synthase activity is Cys819. Residues 859–1053 are shikimate kinase; the sequence is ERSVFIIGMR…MEKDHSFFVS (195 aa). An ATP-binding site is contributed by 866–873; sequence GMRGAGKT. Positions 1054–1267 are 3-dehydroquinase; the sequence is LTVPDVSEAA…AAPGQMSAAE (214 aa). His1170 (proton acceptor; for 3-dehydroquinate dehydratase activity) is an active-site residue. Lys1198 (schiff-base intermediate with substrate; for 3-dehydroquinate dehydratase activity) is an active-site residue. The segment at 1280 to 1569 is shikimate dehydrogenase; that stretch reads PCNFYLFGKP…RDARSAVLGL (290 aa).

This sequence in the N-terminal section; belongs to the sugar phosphate cyclases superfamily. Dehydroquinate synthase family. The protein in the 2nd section; belongs to the EPSP synthase family. It in the 3rd section; belongs to the shikimate kinase family. In the 4th section; belongs to the type-I 3-dehydroquinase family. This sequence in the C-terminal section; belongs to the shikimate dehydrogenase family. As to quaternary structure, homodimer. The cofactor is Zn(2+).

The protein localises to the cytoplasm. The enzyme catalyses 7-phospho-2-dehydro-3-deoxy-D-arabino-heptonate = 3-dehydroquinate + phosphate. It catalyses the reaction 3-dehydroquinate = 3-dehydroshikimate + H2O. The catalysed reaction is shikimate + NADP(+) = 3-dehydroshikimate + NADPH + H(+). It carries out the reaction shikimate + ATP = 3-phosphoshikimate + ADP + H(+). The enzyme catalyses 3-phosphoshikimate + phosphoenolpyruvate = 5-O-(1-carboxyvinyl)-3-phosphoshikimate + phosphate. The protein operates within metabolic intermediate biosynthesis; chorismate biosynthesis; chorismate from D-erythrose 4-phosphate and phosphoenolpyruvate: step 2/7. Its pathway is metabolic intermediate biosynthesis; chorismate biosynthesis; chorismate from D-erythrose 4-phosphate and phosphoenolpyruvate: step 3/7. It participates in metabolic intermediate biosynthesis; chorismate biosynthesis; chorismate from D-erythrose 4-phosphate and phosphoenolpyruvate: step 4/7. It functions in the pathway metabolic intermediate biosynthesis; chorismate biosynthesis; chorismate from D-erythrose 4-phosphate and phosphoenolpyruvate: step 5/7. The protein operates within metabolic intermediate biosynthesis; chorismate biosynthesis; chorismate from D-erythrose 4-phosphate and phosphoenolpyruvate: step 6/7. Functionally, the AROM polypeptide catalyzes 5 consecutive enzymatic reactions in prechorismate polyaromatic amino acid biosynthesis. The chain is Pentafunctional AROM polypeptide from Fusarium vanettenii (strain ATCC MYA-4622 / CBS 123669 / FGSC 9596 / NRRL 45880 / 77-13-4) (Fusarium solani subsp. pisi).